The primary structure comprises 378 residues: L-asparaginase-like protein GF11609 (378 aa).

Positions 1 to 21 (MCSPLPLLILRLLLLTHPSLG) are cleaved as a signal peptide. 3 cysteine pairs are disulfide-bonded: C71-C76, C170-C186, and C325-C352.

This sequence belongs to the Ntn-hydrolase family.

The polypeptide is L-asparaginase-like protein GF11609 (Drosophila ananassae (Fruit fly)).